The chain runs to 207 residues: Holliday junction branch migration complex subunit RuvA (207 aa).

The tract at residues 1–63 (MIDSLHGEVL…DDGIDLYAFE (63 aa)) is domain I. Positions 64–142 (SDEARQMFAM…VFDSGDSASE (79 aa)) are domain II. The flexible linker stretch occupies residues 143-154 (PQSGVGGNSEAE). Positions 155–207 (VDSGVVGTVTQALVELGFPEKQAEKTATSAAAEGGSVSEILKRALRSMSSERN) are domain III.

It belongs to the RuvA family. As to quaternary structure, homotetramer. Forms an RuvA(8)-RuvB(12)-Holliday junction (HJ) complex. HJ DNA is sandwiched between 2 RuvA tetramers; dsDNA enters through RuvA and exits via RuvB. An RuvB hexamer assembles on each DNA strand where it exits the tetramer. Each RuvB hexamer is contacted by two RuvA subunits (via domain III) on 2 adjacent RuvB subunits; this complex drives branch migration. In the full resolvosome a probable DNA-RuvA(4)-RuvB(12)-RuvC(2) complex forms which resolves the HJ.

It localises to the cytoplasm. In terms of biological role, the RuvA-RuvB-RuvC complex processes Holliday junction (HJ) DNA during genetic recombination and DNA repair, while the RuvA-RuvB complex plays an important role in the rescue of blocked DNA replication forks via replication fork reversal (RFR). RuvA specifically binds to HJ cruciform DNA, conferring on it an open structure. The RuvB hexamer acts as an ATP-dependent pump, pulling dsDNA into and through the RuvAB complex. HJ branch migration allows RuvC to scan DNA until it finds its consensus sequence, where it cleaves and resolves the cruciform DNA. In Corynebacterium kroppenstedtii (strain DSM 44385 / JCM 11950 / CIP 105744 / CCUG 35717), this protein is Holliday junction branch migration complex subunit RuvA.